Reading from the N-terminus, the 260-residue chain is Type II methyltransferase M.CviBI (260 aa).

S-adenosyl-L-methionine is bound by residues W7, K11, D54, and D177.

The protein belongs to the N(4)/N(6)-methyltransferase family.

The catalysed reaction is a 2'-deoxyadenosine in DNA + S-adenosyl-L-methionine = an N(6)-methyl-2'-deoxyadenosine in DNA + S-adenosyl-L-homocysteine + H(+). Its function is as follows. An alpha subtype methylase, recognizes the double-stranded sequence 5'-GANTC-3', methylates A-2 on both strands, and protects the DNA from cleavage by the CviBI endonuclease. This Paramecium bursaria Chlorella virus NC1A (PBCV-NC1A) protein is Type II methyltransferase M.CviBI.